A 238-amino-acid chain; its full sequence is Ribonuclease PH (238 aa).

Phosphate-binding positions include Arg-86 and 124 to 126; that span reads GTR.

It belongs to the RNase PH family. As to quaternary structure, homohexameric ring arranged as a trimer of dimers.

It catalyses the reaction tRNA(n+1) + phosphate = tRNA(n) + a ribonucleoside 5'-diphosphate. Phosphorolytic 3'-5' exoribonuclease that plays an important role in tRNA 3'-end maturation. Removes nucleotide residues following the 3'-CCA terminus of tRNAs; can also add nucleotides to the ends of RNA molecules by using nucleoside diphosphates as substrates, but this may not be physiologically important. Probably plays a role in initiation of 16S rRNA degradation (leading to ribosome degradation) during starvation. This chain is Ribonuclease PH, found in Sphingopyxis alaskensis (strain DSM 13593 / LMG 18877 / RB2256) (Sphingomonas alaskensis).